Consider the following 502-residue polypeptide: Premnaspirodiene oxygenase (502 aa).

A helical transmembrane segment spans residues 2–22; it reads QFFSLVSIFLFLSFLFLLRKW. Heme is bound at residue Cys440.

This sequence belongs to the cytochrome P450 family. Heme serves as cofactor.

Its subcellular location is the membrane. The catalysed reaction is (-)-vetispiradiene + 2 reduced [NADPH--hemoprotein reductase] + 2 O2 = solavetivone + 2 oxidized [NADPH--hemoprotein reductase] + 3 H2O + 2 H(+). In terms of biological role, involved in the biosynthesis of solavetivone, a potent antifungal phytoalexin. Catalyzes the successive and independent hydroxylations of premnaspirodiene and solavetivol. The first hydroxylation step is 3-fold more efficient than the second hydroxylation reaction. In Hyoscyamus muticus (Egyptian henbane), this protein is Premnaspirodiene oxygenase (CYP71D55).